The primary structure comprises 167 residues: MITDILAMNLQVVFCGINPGLSTAHHGYHFANPSNRFWKVIHHVGFTERLLTPAEEQHLLDTGCGITMLVERPTVEATELGRDELLQGGNAIVEKMERYQPRALAVLGKQAFSQAFGIKKVSWGRQSLNIGETQVWVLPNPSGLNRATLESLVASYQELHQALQDKA.

Belongs to the uracil-DNA glycosylase (UDG) superfamily. TDG/mug family. As to quaternary structure, binds DNA as a monomer.

Its subcellular location is the cytoplasm. It catalyses the reaction Specifically hydrolyzes mismatched double-stranded DNA and polynucleotides, releasing free uracil.. In terms of biological role, excises ethenocytosine and uracil, which can arise by alkylation or deamination of cytosine, respectively, from the corresponding mispairs with guanine in ds-DNA. It is capable of hydrolyzing the carbon-nitrogen bond between the sugar-phosphate backbone of the DNA and the mispaired base. The complementary strand guanine functions in substrate recognition. Required for DNA damage lesion repair in stationary-phase cells. The polypeptide is G/U mismatch-specific DNA glycosylase (Pectobacterium carotovorum subsp. carotovorum (strain PC1)).